A 953-amino-acid polypeptide reads, in one-letter code: Atromentin synthetase invA5 (953 aa).

The segment at 37–460 is adenylation (A) domain; sequence SRAVSQYPDH…SGRIKDTVIV (424 aa). The Carrier domain occupies 592–670; that stretch reads APSTETEKTL…SLAKYVDSLI (79 aa). Residues 597–667 form a thiolation and peptide carrier (T) domain region; sequence TEKTLAGIYA…VISSLAKYVD (71 aa). O-(pantetheine 4'-phosphoryl)serine is present on serine 629. The segment at 693–795 is thioesterase (TE) domain; sequence PIFMVHPGVG…FTGLINIPPN (103 aa).

The protein belongs to the ATP-dependent AMP-binding enzyme family.

The protein operates within secondary metabolite biosynthesis. In terms of biological role, an L-tyrosine:2-oxoglutarate aminotransferase (probably invD) and atromentin synthetase invA5 catalyze consecutive steps to turn over L-tyrosine into atromentin, which represents the generic precursor molecule for the entire terphenylquinone and pulvinic acid family of pigments, which are widely distributed secondary metabolites in homobasidiomycetes. The first step catalyzed by the aminotransferase converts L-tyrosine in to 4-hydroxyphenylpyruvate (4-HPP). Adenylation of two 4-HPP monomers by the invA5 adenylation (A) domain, covalent tethering of the monomers as a thioester and oxoester onto the invA5 thiolation (T) and thioesterase (TE) domains, respectively, and symmetric C-C-bond formation between two monomers catalyzed by the invA5 TE domain leads to atromentin. The polypeptide is Atromentin synthetase invA5 (invA5) (Paxillus involutus (Naked brimcap)).